We begin with the raw amino-acid sequence, 291 residues long: Ribosomal protein L11 methyltransferase (291 aa).

Residues Thr136, Gly159, Asp181, and Asn228 each contribute to the S-adenosyl-L-methionine site.

Belongs to the methyltransferase superfamily. PrmA family.

Its subcellular location is the cytoplasm. It carries out the reaction L-lysyl-[protein] + 3 S-adenosyl-L-methionine = N(6),N(6),N(6)-trimethyl-L-lysyl-[protein] + 3 S-adenosyl-L-homocysteine + 3 H(+). Functionally, methylates ribosomal protein L11. The chain is Ribosomal protein L11 methyltransferase from Sinorhizobium fredii (strain NBRC 101917 / NGR234).